Reading from the N-terminus, the 311-residue chain is Delta(1)-pyrroline-2-carboxylate reductase 2 (311 aa).

It belongs to the ornithine cyclodeaminase/mu-crystallin family.

The catalysed reaction is L-proline + NAD(+) = 1-pyrroline-2-carboxylate + NADH + H(+). It carries out the reaction L-proline + NADP(+) = 1-pyrroline-2-carboxylate + NADPH + H(+). Functionally, catalyzes the reduction of Delta(1)-pyrroline-2-carboxylate (Pyr2C) to L-proline, using preferentially NADPH over NADH as the electron donor. May be involved in a degradation pathway that converts trans-3-hydroxy-L-proline (t3LHyp) to L-proline. The polypeptide is Delta(1)-pyrroline-2-carboxylate reductase 2 (Burkholderia ambifaria (strain ATCC BAA-244 / DSM 16087 / CCUG 44356 / LMG 19182 / AMMD) (Burkholderia cepacia (strain AMMD))).